The chain runs to 318 residues: Death effector domain-containing protein (318 aa).

The region spanning 25–103 (SLHRMFDIVG…RHDLLPYVTL (79 aa)) is the DED domain. The disordered stretch occupies residues 128–191 (PRALSDPEPR…SVTPDPKEKQ (64 aa)).

As to quaternary structure, interacts with CASP8, CASP10, KRT8, KRT18, CASP3 and FADD. Homodimerizes and heterodimerizes with DEDD2. In terms of processing, exists predominantly in a mono- or diubiquitinated form. As to expression, ubiquitously expressed.

The protein resides in the cytoplasm. Its subcellular location is the nucleus. It localises to the nucleolus. A scaffold protein that directs CASP3 to certain substrates and facilitates their ordered degradation during apoptosis. May also play a role in mediating CASP3 cleavage of KRT18. Regulates degradation of intermediate filaments during apoptosis. May play a role in the general transcription machinery in the nucleus and might be an important regulator of the activity of GTF3C3. Inhibits DNA transcription in vitro. This is Death effector domain-containing protein (Dedd) from Mus musculus (Mouse).